A 25-amino-acid chain; its full sequence is GLFGVLGSIAKHVLPHVVPVIAEKL.

Position 25 is a leucine amide (leucine 25).

This sequence belongs to the frog skin active peptide (FSAP) family. Caerin subfamily. In terms of tissue distribution, expressed by the skin dorsal glands.

The protein resides in the secreted. Antimicrobial peptide. Adopts an alpha helical conformation which can disrupt bacterial membranes. Strongly inhibits the formation of NO by neuronal nitric oxide synthase (nNOS) at micromolar concentrations. Acts by a non-competitive mechanism, probably by binding to calcium/calmodulin and as a consequence blocking calmodulin attachment to nNOS. The sequence is that of Caerin-1.9 from Ranoidea chloris (Red-eyed tree frog).